We begin with the raw amino-acid sequence, 130 residues long: MIGNWNYGTGRRKSSVARVFIKKGSGQITVNGKPVEQYFGRQTSIMIVKQPLFLTNNVEAFDIKVNVHGGGESGQAGAVRHGVTRALIDYDAALKSELSRAGFVTRDAREVERKKVGLHGARRRKQFSKR.

This sequence belongs to the universal ribosomal protein uS9 family.

The protein is Small ribosomal subunit protein uS9 of Methylibium petroleiphilum (strain ATCC BAA-1232 / LMG 22953 / PM1).